An 824-amino-acid polypeptide reads, in one-letter code: MTMTGGHHHDAHHEDFQLKDTNPLLGEQWPKGAAGPARPAVGGGIAGWLGLEKPSSTYDLVEQMFFLYVRVVKAKDLPPNPITGSPMDPYVEVKLGNYKGTTKHYDRRANPEWDQVFAFSKSRVQSNVLEVYLKDKEMLGRDDYVGRVVFDLAEVPTRVPPDSPLAPQWYRLEERRVGGGGDGGGLKVRGELMLAVWIGTQADEAFPEAWHSDAATVRGEGVASVRSKAYVSPKLWYLRVNVIEAQDVQPQARGRAPEVFVKAQVGNQILKTSVVAAPTLNPRWNEDLVFVVAEPFEEQLLLTVEDRVTPRKDDLLGRAALPLALFEKRLDHRPFVQSRWFDLEKFGIGGAIEGETRRELRFASRVHVRACLEGAYHVMDESTMYISDTRPTARQLWKPPVGVLEVGILGAAGLQPMKNRDGRGTTDAYCVAKYGQKWVRTRTMLGTFSPTWNEQYTWEVFDPCTVITIGVFDNNHLGNGNGNGNNAGGGGGGSPPARDARVGKIRIRLSTLETDRVYTHAYPLIVLQPSGVKKMGELRLAVRFTCLSLMNMVHLYTQPLLPRMHYLHPFTVTQLDALRYQAMGIVAARLGRAEPPLRREVVEYMLDVESHMWSMRRSKANFFRAVSLFSGAAAAARWFADVCHWKNVATTALVHVLLLILVWYPELILPTVFLYMFMIGLWNYRRRPRHPPHMDTKMSWAEAVHPDELDEEFDTFPTSRQQDVVYMRYDRLRSVAGRIQTVVGDMATQGERLQSLLGWRDPRATCLFVVFCLVAAVVLYVTPFRVVALVAGLYLLRHPRFRSRLPAVPSNFFRRLPSRADSML.

C2 domains follow at residues 48–170, 217–341, and 385–522; these read WLGL…PQWY, VRGE…SRWF, and YISD…THAY. 3 helical membrane-spanning segments follow: residues 625–645, 657–677, and 764–784; these read AVSL…VCHW, LLLI…LYMF, and ATCL…VTPF.

Belongs to the MCTP family. As to quaternary structure, interacts with RFT1 and PI4KG4. As to expression, specifically expressed in the phloem including companion cells.

It is found in the endoplasmic reticulum membrane. Involved in the export of the long day-specific flower-promoting signal (florigen) RFT1 from the phloem companion cells to sieve elements. Promotes flowering under long days through the transport of RFT1 from the leaves to the shoot apical meristem (SAM). This chain is FT-interacting protein 1, found in Oryza sativa subsp. japonica (Rice).